Consider the following 123-residue polypeptide: Small ribosomal subunit protein uS12 (123 aa).

Residues 1 to 30 (MPTIQQLIRKPRQPKVQRSKSQHLQSCPQK) form a disordered region. Residues 9 to 21 (RKPRQPKVQRSKS) are compositionally biased toward basic residues. D89 is modified (3-methylthioaspartic acid).

This sequence belongs to the universal ribosomal protein uS12 family. In terms of assembly, part of the 30S ribosomal subunit. Contacts proteins S8 and S17. May interact with IF1 in the 30S initiation complex.

Its function is as follows. With S4 and S5 plays an important role in translational accuracy. In terms of biological role, interacts with and stabilizes bases of the 16S rRNA that are involved in tRNA selection in the A site and with the mRNA backbone. Located at the interface of the 30S and 50S subunits, it traverses the body of the 30S subunit contacting proteins on the other side and probably holding the rRNA structure together. The combined cluster of proteins S8, S12 and S17 appears to hold together the shoulder and platform of the 30S subunit. In Paracoccus denitrificans (strain Pd 1222), this protein is Small ribosomal subunit protein uS12.